The chain runs to 418 residues: Gamma-glutamyl phosphate reductase (418 aa).

It belongs to the gamma-glutamyl phosphate reductase family.

The protein localises to the cytoplasm. The catalysed reaction is L-glutamate 5-semialdehyde + phosphate + NADP(+) = L-glutamyl 5-phosphate + NADPH + H(+). Its pathway is amino-acid biosynthesis; L-proline biosynthesis; L-glutamate 5-semialdehyde from L-glutamate: step 2/2. Its function is as follows. Catalyzes the NADPH-dependent reduction of L-glutamate 5-phosphate into L-glutamate 5-semialdehyde and phosphate. The product spontaneously undergoes cyclization to form 1-pyrroline-5-carboxylate. This chain is Gamma-glutamyl phosphate reductase, found in Geobacter metallireducens (strain ATCC 53774 / DSM 7210 / GS-15).